The primary structure comprises 220 residues: Octanoyltransferase (220 aa).

The BPL/LPL catalytic domain maps to 27-208 (PGTADEIWLC…QLARAHGQAV (182 aa)). Substrate-binding positions include 66-73 (RGGQVTYH), 139-141 (ALG), and 152-154 (GLA). The Acyl-thioester intermediate role is filled by C170.

It belongs to the LipB family.

It localises to the cytoplasm. The catalysed reaction is octanoyl-[ACP] + L-lysyl-[protein] = N(6)-octanoyl-L-lysyl-[protein] + holo-[ACP] + H(+). It functions in the pathway protein modification; protein lipoylation via endogenous pathway; protein N(6)-(lipoyl)lysine from octanoyl-[acyl-carrier-protein]: step 1/2. Catalyzes the transfer of endogenously produced octanoic acid from octanoyl-acyl-carrier-protein onto the lipoyl domains of lipoate-dependent enzymes. Lipoyl-ACP can also act as a substrate although octanoyl-ACP is likely to be the physiological substrate. This chain is Octanoyltransferase, found in Bordetella bronchiseptica (strain ATCC BAA-588 / NCTC 13252 / RB50) (Alcaligenes bronchisepticus).